Reading from the N-terminus, the 247-residue chain is ATP synthase subunit a, chloroplastic (247 aa).

The next 5 helical transmembrane spans lie at 38–58 (QVLITSWVVIAILLGSVTVAV), 95–115 (VPFIGTMFLFIFVSNWSGALL), 134–154 (INTTVALALPTSVAYFYAGLT), 199–219 (LVVVVLVSLVPLVVPIPVMFL), and 220–240 (GLFTSGIQALIFATLAAAYIG).

Belongs to the ATPase A chain family. In terms of assembly, F-type ATPases have 2 components, CF(1) - the catalytic core - and CF(0) - the membrane proton channel. CF(1) has five subunits: alpha(3), beta(3), gamma(1), delta(1), epsilon(1). CF(0) has four main subunits: a, b, b' and c.

The protein localises to the plastid. It is found in the chloroplast thylakoid membrane. Key component of the proton channel; it plays a direct role in the translocation of protons across the membrane. This chain is ATP synthase subunit a, chloroplastic, found in Acorus calamus var. americanus (American sweet flag).